The sequence spans 433 residues: Acetyl-CoA-benzylalcohol acetyltransferase (433 aa).

Residues histidine 152 and aspartate 377 each act as proton acceptor in the active site.

Belongs to the plant acyltransferase family. In terms of processing, the N-terminus is blocked. As to expression, expressed in petals, style, sepals and stamens. Very low expression in stigma and not detected in leaves.

The catalysed reaction is benzyl alcohol + acetyl-CoA = benzyl acetate + CoA. It carries out the reaction (E)-cinnamyl alcohol + acetyl-CoA = (E)-cinnamyl acetate + CoA. In terms of biological role, involved in the biosynthesis of benzyl acetate, a major constituent of the floral scent. Can use benzylalcohol, cinnamylalcohol, 3-cis-hexene-1-ol or heptanol as substrates. Has some activity with 2-phenylethanol and 2-naphtalene-ethanol, but no activity with linalool, 2-hydroxybenzylalcohol, 3-hydroxybenzylalcohol or 4-hydroxybenzylalcohol. This is Acetyl-CoA-benzylalcohol acetyltransferase (BEAT) from Clarkia breweri (Fairy fans).